Here is a 938-residue protein sequence, read N- to C-terminus: Glutamate receptor 3.1 (938 aa).

The signal sequence occupies residues 1 to 20; that stretch reads MKFIFYLFSIFCCLCSCAQS. Residues 21-588 are Extracellular-facing; sequence QNISGRPDAV…GGWAFLQPFT (568 aa). Asn22, Asn39, Asn59, Asn340, Asn418, Asn436, and Asn551 each carry an N-linked (GlcNAc...) asparagine glycan. Residues 589 to 609 form a helical membrane-spanning segment; sequence IKMWTVTGLFFLIIGTVVWML. At 610–618 the chain is on the cytoplasmic side; the sequence is EHRINDEFR. Residues 619-639 form a helical membrane-spanning segment; sequence GPPAKQLITVFWFSFSTLFFA. At 640 to 650 the chain is on the cytoplasmic side; the sequence is HREDTRSTLGR. Residues 651–671 traverse the membrane as a helical segment; sequence FVIIIWLFVVLIIQSSYTASL. At 672-830 the chain is on the extracellular side; it reads TSILTVQQLT…ELDQDPDRLD (159 aa). Residues 831–851 form a helical membrane-spanning segment; it reads VYSFSALFLICGLACIFALAI. Residues 852–938 are Cytoplasmic-facing; sequence HACNLFYQYS…SGSGSTTASC (87 aa). The segment at 906-938 is disordered; it reads AAKEKASGLGGSGGSMSGVSFTSSGSGSTTASC. The segment covering 922–938 has biased composition (low complexity); that stretch reads SGVSFTSSGSGSTTASC.

It belongs to the glutamate-gated ion channel (TC 1.A.10.1) family. May form homomultimers. Expressed at low levels in roots and leaves.

The protein localises to the membrane. Functionally, glutamate-gated receptor that probably acts as a non-selective cation channel. Involved in root development. May regulate cell proliferation and cell death in the root apex. The polypeptide is Glutamate receptor 3.1 (GLR3.1) (Oryza sativa subsp. japonica (Rice)).